The sequence spans 238 residues: Ribosomal RNA small subunit methyltransferase G (238 aa).

S-adenosyl-L-methionine contacts are provided by residues G77, F82, A128 to E129, and R147.

It belongs to the methyltransferase superfamily. RNA methyltransferase RsmG family.

Its subcellular location is the cytoplasm. Functionally, specifically methylates the N7 position of guanine in position 535 of 16S rRNA. The chain is Ribosomal RNA small subunit methyltransferase G from Exiguobacterium sibiricum (strain DSM 17290 / CCUG 55495 / CIP 109462 / JCM 13490 / 255-15).